The chain runs to 222 residues: N-(5'-phosphoribosyl)anthranilate isomerase (222 aa).

This sequence belongs to the TrpF family.

The enzyme catalyses N-(5-phospho-beta-D-ribosyl)anthranilate = 1-(2-carboxyphenylamino)-1-deoxy-D-ribulose 5-phosphate. The protein operates within amino-acid biosynthesis; L-tryptophan biosynthesis; L-tryptophan from chorismate: step 3/5. The polypeptide is N-(5'-phosphoribosyl)anthranilate isomerase (Xanthomonas oryzae pv. oryzae (strain PXO99A)).